We begin with the raw amino-acid sequence, 89 residues long: ATP synthase subunit H, mitochondrial (89 aa).

As to quaternary structure, F-type ATP synthases have 2 components, the catalytic core F(1) and the membrane-embedded component F(0), linked together by a central stalk and a peripheral stalk. The central stalk, also called rotor shaft, is often seen as part of F(1). The peripheral stalk is seen as part of F(0). F(0) contains the membrane channel next to the rotor. F-type ATP synthases form dimers but each monomer functions independently in ATP generation. The dimer consists of 18 different polypeptides: ATP1 (subunit alpha, part of F(1), 3 molecules per monomer), ATP2 (subunit beta, part of F(1), 3 molecules per monomer), ATP3 (subunit gamma, part of the central stalk), ATP4 (subunit b, part of the peripheral stalk), ATP5/OSCP (subunit 5/OSCP, part of the peripheral stalk), ATP6 (subunit a, part of the peripheral stalk), ATP7 (subunit d, part of the peripheral stalk), ATP8 (subunit 8, part of the peripheral stalk), OLI1 (subunit c, part of the rotor, 10 molecules per monomer), ATP14 (subunit H, part of the peripheral stalk), ATP15 (subunit epsilon, part of the central stalk), ATP16 (subunit delta, part of the central stalk), ATP17 (subunit f, part of the peripheral stalk), ATP18 (subunit i/j, part of the peripheral stalk). Dimer-specific subunits are ATP19 (subunit k, at interface between monomers), ATP20 (subunit g, at interface between monomers), TIM11 (subunit e, at interface between monomers). Also contains subunit L.

The protein localises to the mitochondrion inner membrane. Its function is as follows. Mitochondrial membrane ATP synthase (F(1)F(0) ATP synthase or Complex V) produces ATP from ADP in the presence of a proton gradient across the membrane which is generated by electron transport complexes of the respiratory chain. F-type ATP synthases consist of two structural domains, F(1) - containing the extramembraneous catalytic core, and F(0) - containing the membrane proton channel, linked together by a central stalk and a peripheral stalk. During catalysis, ATP synthesis in the catalytic domain of F(1) is coupled via a rotary mechanism of the central stalk subunits to proton translocation. Part of the peripheral stalk. The polypeptide is ATP synthase subunit H, mitochondrial (Pichia angusta (Yeast)).